Consider the following 869-residue polypeptide: Protein translocase subunit SecA (869 aa).

ATP contacts are provided by residues glutamine 85, 103–107, and aspartate 508; that span reads GEGKT.

The protein belongs to the SecA family. As to quaternary structure, monomer and homodimer. Part of the essential Sec protein translocation apparatus which comprises SecA, SecYEG and auxiliary proteins SecDF. Other proteins may also be involved.

The protein resides in the cell membrane. Its subcellular location is the cytoplasm. It carries out the reaction ATP + H2O + cellular proteinSide 1 = ADP + phosphate + cellular proteinSide 2.. In terms of biological role, part of the Sec protein translocase complex. Interacts with the SecYEG preprotein conducting channel. Has a central role in coupling the hydrolysis of ATP to the transfer of proteins into and across the cell membrane, serving as an ATP-driven molecular motor driving the stepwise translocation of polypeptide chains across the membrane. The sequence is that of Protein translocase subunit SecA from Deinococcus deserti (strain DSM 17065 / CIP 109153 / LMG 22923 / VCD115).